The primary structure comprises 3081 residues: Cilia- and flagella-associated protein 54 (3081 aa).

Disordered regions lie at residues serine 542–alanine 579, threonine 591–leucine 626, proline 910–lysine 942, alanine 1406–proline 1451, glutamate 1518–valine 1586, arginine 1636–proline 1657, glycine 2176–proline 2210, methionine 2229–alanine 2306, and alanine 2776–glycine 2806. Over residues glycine 564–alanine 579 the composition is skewed to low complexity. Pro residues predominate over residues methionine 1428 to isoleucine 1449. Over residues glycine 1538–proline 1550 the composition is skewed to basic and acidic residues. Composition is skewed to low complexity over residues alanine 1638–glycine 1648, alanine 2181–alanine 2199, and glutamate 2240–glycine 2269. Pro residues predominate over residues proline 2289–serine 2301. Over residues alanine 2776–proline 2788 the composition is skewed to low complexity. Over residues lysine 2796–aspartate 2805 the composition is skewed to gly residues.

The protein belongs to the CFAP54 family. As to quaternary structure, part of the PDCP1 complex composed of CFAP46, CFAP54, CFAP74 and CFAP221; the PDCP1 complex binds calmodulin.

Its subcellular location is the cytoplasm. The protein resides in the cytoskeleton. It is found in the cilium axoneme. The protein is Cilia- and flagella-associated protein 54 of Chlamydomonas reinhardtii (Chlamydomonas smithii).